Consider the following 345-residue polypeptide: Phosphoribosylformylglycinamidine cyclo-ligase (345 aa).

It belongs to the AIR synthase family.

It localises to the cytoplasm. The catalysed reaction is 2-formamido-N(1)-(5-O-phospho-beta-D-ribosyl)acetamidine + ATP = 5-amino-1-(5-phospho-beta-D-ribosyl)imidazole + ADP + phosphate + H(+). Its pathway is purine metabolism; IMP biosynthesis via de novo pathway; 5-amino-1-(5-phospho-D-ribosyl)imidazole from N(2)-formyl-N(1)-(5-phospho-D-ribosyl)glycinamide: step 2/2. The chain is Phosphoribosylformylglycinamidine cyclo-ligase from Actinobacillus succinogenes (strain ATCC 55618 / DSM 22257 / CCUG 43843 / 130Z).